The primary structure comprises 248 residues: 5'-nucleotidase SurE (248 aa).

A divalent metal cation is bound by residues Asp8, Asp9, Ser39, and Asn91.

Belongs to the SurE nucleotidase family. A divalent metal cation is required as a cofactor.

The protein resides in the cytoplasm. The catalysed reaction is a ribonucleoside 5'-phosphate + H2O = a ribonucleoside + phosphate. In terms of biological role, nucleotidase that shows phosphatase activity on nucleoside 5'-monophosphates. This is 5'-nucleotidase SurE from Neisseria gonorrhoeae (strain ATCC 700825 / FA 1090).